We begin with the raw amino-acid sequence, 1110 residues long: MTDVDPHATRRDLVPNIPAELLEAGFDNVEEIGRGGFGVVYRCVQPSLDRAVAVKVLSTDLDRDNLERFLREQRAMGRLSGHPHIVTVLQVGVLAGGRPFIVMPYHAKNSLETLIRRHGPLDWRETLSIGVKLAGALEAAHRVGTLHRDVKPGNILLTDYGEPQLTDFGIARIAGGFETATGVIAGSPAFTAPEVLEGASPTPASDVYSLGATLFCALTGHAAYERRSGERVIAQFLRITSQPIPDLRKQGLPADVAAAIERAMARHPADRPATAADVGEELRDVQRRNGVSVDEMPLPVELGVERRRSPEAHAAHRHTGGGTPTVPTPPTPATKYRPSVPTGSLVTRSRLTDILRAGGRRRLILIHAPSGFGKSTLAAQWREELSRDGAAVAWLTIDNDDNNEVWFLSHLLESIRRVRPTLAESLGHVLEEHGDDAGRYVLTSLIDEIHENDDRIAVVIDDWHRVSDSRTQAALGFLLDNGCHHLQLIVTSWSRAGLPVGRLRIGDELAEIDSAALRFDTDEAAALLNDAGGLRLPRADVQALTTSTDGWAAALRLAALSLRGGGDATQLLRGLSGASDVIHEFLSENVLDTLEPELREFLLVASVTERTCGGLASALAGITNGRAMLEEAEHRGLFLQRTEDDPNWFRFHQMFADFLHRRLERGGSHRVAELHRRASAWFAENGYLHEAVDHALAAGDPARAVDLVEQDETNLPEQSKMTTLLAIVQKLPTSMVVSRARLQLAIAWANILLQRPAPATGALNRFETALGRAELPEATQADLRAEADVLRAVAEVFADRVERVDDLLAEAMSRPDTLPPRVPGTAGNTAALAAICRFEFAEVYPLLDWAAPYQEMMGPFGTVYAQCLRGMAARNRLDIVAALQNFRTAFEVGTAVGAHSHAARLAGSLLAELLYETGDLAGAGRLMDESYLLGSEGGAVDYLAARYVIGARVKAAQGDHEGAADRLSTGGDTAVQLGLPRLAARINNERIRLGIALPAAVAADLLAPRTIPRDNGIATMTAELDEDSAVRLLSAGDSADRDQACQRAGALAAAIDGTRRPLAALQAQILHIETLAATGRESDARNELAPVATKCAELGLSRLLVDAGLA.

Positions 26 to 283 (FDNVEEIGRG…TAADVGEELR (258 aa)) constitute a Protein kinase domain. ATP is bound by residues 32-40 (IGRGGFGVV) and lysine 55. Aspartate 149 functions as the Proton acceptor in the catalytic mechanism. Mg(2+)-binding residues include asparagine 154 and aspartate 167. Phosphothreonine; by autocatalysis occurs at positions 179 and 181. A disordered region spans residues 308 to 343 (RSPEAHAAHRHTGGGTPTVPTPPTPATKYRPSVPTG).

The protein belongs to the protein kinase superfamily. Ser/Thr protein kinase family. As to quaternary structure, forms oligomeric complexes in solution. Post-translationally, can autophosphorylate the carboxyl terminal region in addition to Thr-179 and Thr-181.

It is found in the cytoplasm. The protein localises to the cell membrane. Its subcellular location is the secreted. It localises to the cell wall. It carries out the reaction L-seryl-[protein] + ATP = O-phospho-L-seryl-[protein] + ADP + H(+). It catalyses the reaction L-threonyl-[protein] + ATP = O-phospho-L-threonyl-[protein] + ADP + H(+). Key microbial factor involved in regulation of early and late events in tuberculosis infection, and in host-pathogen interactions. The chain is Serine/threonine-protein kinase PknK (pknK) from Mycobacterium tuberculosis (strain CDC 1551 / Oshkosh).